The primary structure comprises 206 residues: MARYIGPKCKLSRREGTDLFLKSGVRALESKCNIEAAPGIHGQRRGRQSDYGTQLREKQKVRRIYGVLERQFRGYYQAAASKKGATGENLLQLLECRLDNVVYRMGFGSTRSESRQLVSHKAISVNGKTVNIPSYQVRPGDVVAVREKSLGQLRIVQALELCAQRGRVEWVDVDAAKKSGVFKNVPARSDLSADINENLIVELYSK.

Residues 96-156 (CRLDNVVYRM…EKSLGQLRIV (61 aa)) form the S4 RNA-binding domain.

This sequence belongs to the universal ribosomal protein uS4 family. As to quaternary structure, part of the 30S ribosomal subunit. Contacts protein S5. The interaction surface between S4 and S5 is involved in control of translational fidelity.

In terms of biological role, one of the primary rRNA binding proteins, it binds directly to 16S rRNA where it nucleates assembly of the body of the 30S subunit. Its function is as follows. With S5 and S12 plays an important role in translational accuracy. The sequence is that of Small ribosomal subunit protein uS4 from Pseudomonas putida (strain ATCC 47054 / DSM 6125 / CFBP 8728 / NCIMB 11950 / KT2440).